The sequence spans 350 residues: tRNA uridine(34) hydroxylase (350 aa).

Residues 146-240 enclose the Rhodanese domain; sequence DDPEAVFVDM…YARRAREQGL (95 aa). The active-site Cysteine persulfide intermediate is cysteine 200.

Belongs to the TrhO family.

The enzyme catalyses uridine(34) in tRNA + AH2 + O2 = 5-hydroxyuridine(34) in tRNA + A + H2O. Its function is as follows. Catalyzes oxygen-dependent 5-hydroxyuridine (ho5U) modification at position 34 in tRNAs. The protein is tRNA uridine(34) hydroxylase of Erwinia tasmaniensis (strain DSM 17950 / CFBP 7177 / CIP 109463 / NCPPB 4357 / Et1/99).